The chain runs to 447 residues: Argininosuccinate synthase (447 aa).

ATP-binding positions include 20–28 (AFSGGLDTS) and Ala-46. Tyr-102 contacts L-citrulline. Residues Gly-132 and Thr-134 each coordinate ATP. Positions 134, 138, and 139 each coordinate L-aspartate. Asn-138 is an L-citrulline binding site. An ATP-binding site is contributed by Asp-139. 2 residues coordinate L-citrulline: Arg-142 and Ser-195. Asp-197 is an ATP binding site. L-citrulline is bound by residues Thr-204, Glu-206, and Glu-283.

Belongs to the argininosuccinate synthase family. Type 2 subfamily. As to quaternary structure, homotetramer.

It is found in the cytoplasm. It catalyses the reaction L-citrulline + L-aspartate + ATP = 2-(N(omega)-L-arginino)succinate + AMP + diphosphate + H(+). It participates in amino-acid biosynthesis; L-arginine biosynthesis; L-arginine from L-ornithine and carbamoyl phosphate: step 2/3. The protein is Argininosuccinate synthase (argG) of Neisseria meningitidis serogroup A / serotype 4A (strain DSM 15465 / Z2491).